Reading from the N-terminus, the 318-residue chain is Formimidoylglutamase (318 aa).

Histidine 130, aspartate 155, histidine 157, aspartate 159, aspartate 246, and aspartate 248 together coordinate Mn(2+).

The protein belongs to the arginase family. The cofactor is Mn(2+).

It catalyses the reaction N-formimidoyl-L-glutamate + H2O = formamide + L-glutamate. Its pathway is amino-acid degradation; L-histidine degradation into L-glutamate; L-glutamate from N-formimidoyl-L-glutamate (hydrolase route): step 1/1. Catalyzes the conversion of N-formimidoyl-L-glutamate to L-glutamate and formamide. The protein is Formimidoylglutamase of Klebsiella pneumoniae (strain 342).